Reading from the N-terminus, the 908-residue chain is Low affinity vacuolar monovalent cation/H(+) antiporter (908 aa).

Residues M1 to S15 show a composition bias toward polar residues. Residues M1–L20 are disordered. Residues M1–W244 lie on the Cytoplasmic side of the membrane. T26 bears the Phosphothreonine mark. S32 bears the Phosphoserine mark. T33 is modified (phosphothreonine). The segment at N68–R147 is disordered. Low complexity predominate over residues S73–T87. Polar residues predominate over residues E102–S121. At S110 the chain carries Phosphoserine. T118 carries the phosphothreonine modification. S121 carries the post-translational modification Phosphoserine. The chain crosses the membrane as a helical span at residues F245–L265. Residues L266–H408 are Vacuolar-facing. N361 carries N-linked (GlcNAc...) asparagine glycosylation. The chain crosses the membrane as a helical span at residues L409–I429. The Cytoplasmic portion of the chain corresponds to P430–T494. Residues N495–L515 traverse the membrane as a helical segment. The Vacuolar portion of the chain corresponds to K516 to S530. A helical transmembrane segment spans residues I531–A551. At S552–G560 the chain is on the cytoplasmic side. A helical transmembrane segment spans residues V561 to A581. Residues L582–G587 are Vacuolar-facing. The helical transmembrane segment at L588–L608 threads the bilayer. The Cytoplasmic portion of the chain corresponds to S609–S626. Residues A627 to L647 traverse the membrane as a helical segment. Topologically, residues Y648–P686 are vacuolar. Residues M687–L707 traverse the membrane as a helical segment. Residues R708–T746 are Cytoplasmic-facing. The chain crosses the membrane as a helical span at residues C747–V767. The Vacuolar portion of the chain corresponds to D768–G783. A helical membrane pass occupies residues L784 to I804. Residues H805–S816 lie on the Cytoplasmic side of the membrane. Residues A817–Y837 form a helical membrane-spanning segment. Residues T838–Q851 lie on the Vacuolar side of the membrane. The helical transmembrane segment at M852–F872 threads the bilayer. Residues T873–K885 lie on the Cytoplasmic side of the membrane. A helical membrane pass occupies residues G886–L906. Topologically, residues S907–E908 are vacuolar.

The protein belongs to the Ca(2+):cation antiporter (CaCA) (TC 2.A.19) family.

The protein resides in the vacuole membrane. In terms of biological role, has a role in promoting intracellular monovalent cation sequestration via the exchange of monovalent cations and especially Na(+) for hydrogen ions across the vacuolar membrane. In Saccharomyces cerevisiae (strain ATCC 204508 / S288c) (Baker's yeast), this protein is Low affinity vacuolar monovalent cation/H(+) antiporter (VNX1).